A 259-amino-acid chain; its full sequence is Tryptophan synthase alpha chain (259 aa).

Residues Glu35 and Asp46 each act as proton acceptor in the active site.

Belongs to the TrpA family. In terms of assembly, tetramer of two alpha and two beta chains.

The catalysed reaction is (1S,2R)-1-C-(indol-3-yl)glycerol 3-phosphate + L-serine = D-glyceraldehyde 3-phosphate + L-tryptophan + H2O. Its pathway is amino-acid biosynthesis; L-tryptophan biosynthesis; L-tryptophan from chorismate: step 5/5. Functionally, the alpha subunit is responsible for the aldol cleavage of indoleglycerol phosphate to indole and glyceraldehyde 3-phosphate. The sequence is that of Tryptophan synthase alpha chain from Methanococcus maripaludis (strain C7 / ATCC BAA-1331).